The chain runs to 61 residues: MAVPKQKSSKSRGRKRRTHQKVAAPTLTVCPECQEAKLPHAACPACGAYRNRNVRPDAVEA.

The disordered stretch occupies residues Met1–Val22. A compositionally biased stretch (basic residues) spans Lys7–Gln20.

The protein belongs to the bacterial ribosomal protein bL32 family.

This Desulforapulum autotrophicum (strain ATCC 43914 / DSM 3382 / VKM B-1955 / HRM2) (Desulfobacterium autotrophicum) protein is Large ribosomal subunit protein bL32.